The following is a 681-amino-acid chain: MSAELASRGRKVYFVGLNEYPFLPLVAGLLRTYAEQDERIAAAYDFQEPVFLVAPVQEMADGIVEPDVLALSCYVWNFRRQMKVAKLVKERYPNVLVVAGGPHVPDRPGNFFEKHPYVDVLAHGEGEVAFRELLATRLSDHPDYTAVPGVSVRRGTEAVVGPKAKRLPRLIDTPSPYLLGVMDGAVATCRERGLRFYALWETNRGCPYSCSFCDWGSATMSTLRKFEDERLQDEIEWFARHDVEDLFICDANFGIMPRDLEIAHALAEARGELGAPRQVRVNFAKNSNDRVFDISKTWHDADLLMGTTLSMQSTDMDVLEAIDRKNIGLDNYRKLQQRYAAENIHTYTELILGLPMETARSFRDGIGSLLEAGNHEDLRVYELGILPNAPLNTPEKIEQYGLRTVPKRMYVERPGTPDDEAETFEMVMETNAMPRDAWVESFSFIQAVQFLHNGCYTRYLSIFLRQEHGIGYTRFYEGLQDYFTGRPDTVLGALYLRMRSLYHDYIDMPALPLANLVASQPDMAADLAPYGRRRGWTIDNWGWLRIATDFDRFHTELREYLATLGLDPAGDARLEDVLRFQQDVMLRPDYSPELGKSAEYAHDWPGYFAGGLLRPRRVRVAYGDQSFGANGRYRPVPGDLKAFTMAAIGTSYPVSRMGHFCHRFESAEVTSLAEPVVSEQW.

In terms of domain architecture, B12-binding spans 1–144; the sequence is MSAELASRGR…ATRLSDHPDY (144 aa). Asn-18, Ser-72, Tyr-74, Val-75, His-103, Gly-126, and Glu-127 together coordinate cob(II)alamin. The Radical SAM core domain occupies 192 to 417; it reads RGLRFYALWE…RMYVERPGTP (226 aa). The [4Fe-4S] cluster site is built by Cys-206 and Cys-210. Phe-212 is a 5'-deoxyadenosine binding site. [4Fe-4S] cluster is bound at residue Cys-213. Cob(II)alamin-binding residues include Asp-214 and Cys-249. The 5'-deoxyadenosine site is built by Gln-312, Glu-349, and Gly-384.

It belongs to the methyltransferase superfamily. It depends on [4Fe-4S] cluster as a cofactor. Cob(II)alamin is required as a cofactor.

Its pathway is antibiotic biosynthesis. Methyltransferase involved in the biosynthesis of the beta-lactam carbapenem antibiotic asparenomycin. Catalyzes three consecutive S-adenosyl-L-methionine-dependent methylations to build out the C6-isopropyl side chain in a stereocontrolled manner. The protein is Cobalamin-dependent radical SAM methyltransferase TokK of Streptomyces tokunonensis.